An 859-amino-acid polypeptide reads, in one-letter code: Leucine--tRNA ligase (859 aa).

The 'HIGH' region motif lies at 42–52 (PYPSGRLHMGH). The 'KMSKS' region motif lies at 618-622 (KMSKS). An ATP-binding site is contributed by Lys-621.

Belongs to the class-I aminoacyl-tRNA synthetase family.

The protein localises to the cytoplasm. It catalyses the reaction tRNA(Leu) + L-leucine + ATP = L-leucyl-tRNA(Leu) + AMP + diphosphate. This Shewanella baltica (strain OS195) protein is Leucine--tRNA ligase.